The sequence spans 217 residues: High frequency lysogenization protein HflD homolog (217 aa).

Belongs to the HflD family.

It localises to the cytoplasm. The protein resides in the cell membrane. The polypeptide is High frequency lysogenization protein HflD homolog (Buchnera aphidicola subsp. Baizongia pistaciae (strain Bp)).